The chain runs to 88 residues: Small ribosomal subunit protein uS15 (88 aa).

This sequence belongs to the universal ribosomal protein uS15 family. As to quaternary structure, part of the 30S ribosomal subunit. Forms a bridge to the 50S subunit in the 70S ribosome, contacting the 23S rRNA.

Its function is as follows. One of the primary rRNA binding proteins, it binds directly to 16S rRNA where it helps nucleate assembly of the platform of the 30S subunit by binding and bridging several RNA helices of the 16S rRNA. In terms of biological role, forms an intersubunit bridge (bridge B4) with the 23S rRNA of the 50S subunit in the ribosome. In Caldicellulosiruptor saccharolyticus (strain ATCC 43494 / DSM 8903 / Tp8T 6331), this protein is Small ribosomal subunit protein uS15.